The chain runs to 686 residues: Translation initiation factor IF-2 (686 aa).

The segment at Glu53–Asp105 is disordered. Basic residues predominate over residues Arg69–Gly81. One can recognise a tr-type G domain in the interval Glu188 to Lys357. The interval Gly197–Thr204 is G1. Gly197–Thr204 contributes to the GTP binding site. The segment at Gly222 to His226 is G2. The interval Asp243 to Gly246 is G3. Residues Asp243–His247 and Asn297–Asp300 contribute to the GTP site. Residues Asn297–Asp300 are G4. Residues Ser333–Ile335 form a G5 region.

The protein belongs to the TRAFAC class translation factor GTPase superfamily. Classic translation factor GTPase family. IF-2 subfamily.

The protein resides in the cytoplasm. Its function is as follows. One of the essential components for the initiation of protein synthesis. Protects formylmethionyl-tRNA from spontaneous hydrolysis and promotes its binding to the 30S ribosomal subunits. Also involved in the hydrolysis of GTP during the formation of the 70S ribosomal complex. This Bacillus cereus (strain ATCC 10987 / NRS 248) protein is Translation initiation factor IF-2.